The following is a 595-amino-acid chain: Sucrose transport protein SUT4 (595 aa).

At 1-61 the chain is on the cytoplasmic side; it reads MDSAAGGGGL…PAARTTTTRK (61 aa). The segment at 29-55 is disordered; the sequence is SLNGGTPRGGSPKDPDATHQQGPPAAR. A helical membrane pass occupies residues 62 to 82; that stretch reads LVLACMVAAGVQFGWALQLSL. Over 83 to 97 the chain is Extracellular; that stretch reads LTPYIQTLGIDHAMA. The helical transmembrane segment at 98-118 threads the bilayer; that stretch reads SFIWLCGPITGFVVQPCVGVW. Topologically, residues 119–130 are cytoplasmic; it reads SDKCRSKYGRRR. A helical membrane pass occupies residues 131 to 151; the sequence is PFILAGCLMICFAVTLIGFSA. Residues 152-173 are Extracellular-facing; it reads DLGYILGDTTEHCSTYKGSRFR. A helical transmembrane segment spans residues 174–194; that stretch reads AAIIFVLGFWMLDLANNTVQG. At 195–213 the chain is on the cytoplasmic side; the sequence is PARALLADLSGPDQCNSAN. Residues 214–234 traverse the membrane as a helical segment; the sequence is AIFCTWMAVGNVLGFSSGASG. Residues 235–256 lie on the Extracellular side of the membrane; that stretch reads NWHKWFPFLMTRACCEACSNLK. Residues 257–277 traverse the membrane as a helical segment; the sequence is AAFLVAVVFLLFCMSVTLYFA. The Cytoplasmic segment spans residues 278-365; the sequence is EEIPLEPTDA…LTSMRHLPPG (88 aa). Positions 291 to 340 are disordered; that stretch reads SDSAPLLNGSRDDNNASNEPRNGALPNGHTDGSNVPANSNAEDSNSNREN. Polar residues predominate over residues 320–334; sequence TDGSNVPANSNAEDS. Residues 366–386 form a helical membrane-spanning segment; the sequence is MYSVLLVMALTWLSWFPFFLF. Residues 387–417 are Extracellular-facing; it reads DTDWMGREVYHGDPNGNLSERKAYDNGVREG. Asn-403 carries N-linked (GlcNAc...) asparagine glycosylation. Residues 418–438 traverse the membrane as a helical segment; that stretch reads AFGLLLNSVVLGIGSFLVDPL. The Cytoplasmic segment spans residues 439–447; that stretch reads CRLMGARLV. Residues 448-468 traverse the membrane as a helical segment; it reads WAISNFTVFICMLATAILSWI. At 469-491 the chain is on the extracellular side; that stretch reads SFDLYSSKLHHIIGANKTVKNSA. A glycan (N-linked (GlcNAc...) asparagine) is linked at Asn-484. The chain crosses the membrane as a helical span at residues 492 to 512; the sequence is LIVFSLLGLPLSITYSVPFSV. Topologically, residues 513-525 are cytoplasmic; the sequence is TAELTAGTGGGQG. A helical membrane pass occupies residues 526-546; sequence LATGVLNLAIVVPQIVVSLGA. The Extracellular portion of the chain corresponds to 547 to 556; it reads GPWDALFGGG. Residues 557–577 traverse the membrane as a helical segment; it reads NVPAFALASVFSLGAGVLAVL. At 578–595 the chain is on the cytoplasmic side; it reads KLPKLPNSYRSAGFHGFG.

The protein belongs to the glycoside-pentoside-hexuronide (GPH) cation symporter transporter (TC 2.A.2.4) family. In terms of assembly, homodimer.

The protein resides in the cell membrane. It participates in glycan biosynthesis; sucrose metabolism. Its function is as follows. Responsible for the transport of sucrose into the cell, with the concomitant uptake of protons (symport system). May also transport other glucosides. The chain is Sucrose transport protein SUT4 (SUT4) from Oryza sativa subsp. indica (Rice).